Here is a 393-residue protein sequence, read N- to C-terminus: NAD(P)H-quinone oxidoreductase subunit H, chloroplastic (393 aa).

This sequence belongs to the complex I 49 kDa subunit family. As to quaternary structure, NDH is composed of at least 16 different subunits, 5 of which are encoded in the nucleus.

The protein resides in the plastid. It is found in the chloroplast thylakoid membrane. The catalysed reaction is a plastoquinone + NADH + (n+1) H(+)(in) = a plastoquinol + NAD(+) + n H(+)(out). It carries out the reaction a plastoquinone + NADPH + (n+1) H(+)(in) = a plastoquinol + NADP(+) + n H(+)(out). In terms of biological role, NDH shuttles electrons from NAD(P)H:plastoquinone, via FMN and iron-sulfur (Fe-S) centers, to quinones in the photosynthetic chain and possibly in a chloroplast respiratory chain. The immediate electron acceptor for the enzyme in this species is believed to be plastoquinone. Couples the redox reaction to proton translocation, and thus conserves the redox energy in a proton gradient. The polypeptide is NAD(P)H-quinone oxidoreductase subunit H, chloroplastic (Calycanthus floridus var. glaucus (Eastern sweetshrub)).